We begin with the raw amino-acid sequence, 1180 residues long: RecBCD enzyme subunit RecB (1180 aa).

The DNA-binding and helicase activity, interacts with RecC stretch occupies residues Met-1 to Lys-852. Residues Thr-3 to Ser-448 enclose the UvrD-like helicase ATP-binding domain. Residue Ala-24–Thr-31 participates in ATP binding. In terms of domain architecture, UvrD-like helicase C-terminal spans Ser-478 to Gly-745. Residues Asn-905–Phe-1180 are nuclease activity, interacts with RecD and RecA. Residues His-964, Asp-1075, and Asp-1088 each contribute to the Mg(2+) site. The active-site For nuclease activity is Asp-1088.

This sequence belongs to the helicase family. UvrD subfamily. As to quaternary structure, heterotrimer of RecB, RecC and RecD. All subunits contribute to DNA-binding. Interacts with RecA. It depends on Mg(2+) as a cofactor.

The catalysed reaction is Exonucleolytic cleavage (in the presence of ATP) in either 5'- to 3'- or 3'- to 5'-direction to yield 5'-phosphooligonucleotides.. It carries out the reaction Couples ATP hydrolysis with the unwinding of duplex DNA by translocating in the 3'-5' direction.. It catalyses the reaction ATP + H2O = ADP + phosphate + H(+). Its function is as follows. A helicase/nuclease that prepares dsDNA breaks (DSB) for recombinational DNA repair. Binds to DSBs and unwinds DNA via a highly rapid and processive ATP-dependent bidirectional helicase activity. Unwinds dsDNA until it encounters a Chi (crossover hotspot instigator) sequence from the 3' direction. Cuts ssDNA a few nucleotides 3' to the Chi site. The properties and activities of the enzyme are changed at Chi. The Chi-altered holoenzyme produces a long 3'-ssDNA overhang and facilitates RecA-binding to the ssDNA for homologous DNA recombination and repair. Holoenzyme degrades any linearized DNA that is unable to undergo homologous recombination. In the holoenzyme this subunit contributes ATPase, 3'-5' helicase, exonuclease activity and loads RecA onto ssDNA. The chain is RecBCD enzyme subunit RecB from Buchnera aphidicola subsp. Baizongia pistaciae (strain Bp).